Consider the following 592-residue polypeptide: Bifunctional dolabella-3,7-dien-18-ol synthase/dolathalia-3,7,11-triene synthase TPS20, chloroplastic (592 aa).

The transit peptide at 1–52 (MEAITKNGSLSQTLVHCGPKSLSSFIPVRCLRFSKNPFPKKLVVTRARTSIN) directs the protein to the chloroplast. Mg(2+) is bound by residues D349, D353, D491, T495, and E499. The DDXXD motif motif lies at 349–353 (DDLYD).

Belongs to the terpene synthase family. Tpsa subfamily. Requires Mg(2+) as cofactor. It depends on Mn(2+) as a cofactor.

Its subcellular location is the plastid. It localises to the chloroplast. It carries out the reaction (2E,6E,10E)-geranylgeranyl diphosphate + H2O = (3E,7E)-dolabella-3,7-dien-18-ol + diphosphate. The enzyme catalyses (2E,6E,10E)-geranylgeranyl diphosphate = (3E,7E)-dolathalia-3,7,11-triene + diphosphate. The protein operates within secondary metabolite biosynthesis; terpenoid biosynthesis. Its function is as follows. Involved in the biosynthesis of diterpenes in roots. Possesses dolabella-3,7-dien-18-ol synthase activity and dolathalia-3,7,11-triene synthase activity in vitro. Catalyzes the formation of dolabella-3,7-dien-18-ol and dolathalia-3,7,11-triene from geranygeranyl diphosphate (GGPP). Does not seem to be involved in sesquiterpene biosynthesis. In Arabidopsis thaliana (Mouse-ear cress), this protein is Bifunctional dolabella-3,7-dien-18-ol synthase/dolathalia-3,7,11-triene synthase TPS20, chloroplastic.